Reading from the N-terminus, the 138-residue chain is uncharacterized protein (138 aa).

The H-T-H motif DNA-binding region spans 17 to 38 (LCRNDVAHEAGTNNVQIMRIEK).

This is an uncharacterized protein from Herpetosiphon aurantiacus (Herpetosiphon giganteus).